The sequence spans 262 residues: Methionine-rich nacre protein (262 aa).

An N-terminal signal peptide occupies residues 1–22; that stretch reads MSIMRRILCLAVVIFIINDVSS. Positions 26–35 are enriched in low complexity; it reads GNNKNWKKNG. Residues 26-84 form a disordered region; the sequence is GNNKNWKKNGMSLSSPGNKKPTGNNAVPQKSKMNNMNQNSLSQPKRSSPPGNSMYNMAN. The span at 36 to 84 shows a compositional bias: polar residues; the sequence is MSLSSPGNKKPTGNNAVPQKSKMNNMNQNSLSQPKRSSPPGNSMYNMAN.

In terms of tissue distribution, expressed in mantle and, after secretion, incorporated into acid-insoluble nacre matrix of the shell (at protein level). Expressed primarily in the mantle with highest level in the mantle pallium and lower level in the mantle edge.

It localises to the secreted. The polypeptide is Methionine-rich nacre protein (Pinctada maxima (Silver-lipped pearl oyster)).